Here is a 495-residue protein sequence, read N- to C-terminus: Glutamyl-tRNA(Gln) amidotransferase subunit A (495 aa).

Residues K78 and S158 each act as charge relay system in the active site. The active-site Acyl-ester intermediate is S182.

This sequence belongs to the amidase family. GatA subfamily. As to quaternary structure, heterotrimer of A, B and C subunits.

It carries out the reaction L-glutamyl-tRNA(Gln) + L-glutamine + ATP + H2O = L-glutaminyl-tRNA(Gln) + L-glutamate + ADP + phosphate + H(+). In terms of biological role, allows the formation of correctly charged Gln-tRNA(Gln) through the transamidation of misacylated Glu-tRNA(Gln) in organisms which lack glutaminyl-tRNA synthetase. The reaction takes place in the presence of glutamine and ATP through an activated gamma-phospho-Glu-tRNA(Gln). In Roseobacter denitrificans (strain ATCC 33942 / OCh 114) (Erythrobacter sp. (strain OCh 114)), this protein is Glutamyl-tRNA(Gln) amidotransferase subunit A.